Reading from the N-terminus, the 188-residue chain is NAD(P)H-quinone oxidoreductase subunit J (188 aa).

Polar residues predominate over residues 1-12 (MSETPSKQTAAS). The disordered stretch occupies residues 1–23 (MSETPSKQTAASDETGAVVAPEP).

The protein belongs to the complex I 30 kDa subunit family. NDH-1 can be composed of about 15 different subunits; different subcomplexes with different compositions have been identified which probably have different functions.

The protein localises to the cellular thylakoid membrane. The enzyme catalyses a plastoquinone + NADH + (n+1) H(+)(in) = a plastoquinol + NAD(+) + n H(+)(out). The catalysed reaction is a plastoquinone + NADPH + (n+1) H(+)(in) = a plastoquinol + NADP(+) + n H(+)(out). NDH-1 shuttles electrons from an unknown electron donor, via FMN and iron-sulfur (Fe-S) centers, to quinones in the respiratory and/or the photosynthetic chain. The immediate electron acceptor for the enzyme in this species is believed to be plastoquinone. Couples the redox reaction to proton translocation, and thus conserves the redox energy in a proton gradient. Cyanobacterial NDH-1 also plays a role in inorganic carbon-concentration. The sequence is that of NAD(P)H-quinone oxidoreductase subunit J from Synechococcus sp. (strain CC9605).